We begin with the raw amino-acid sequence, 436 residues long: Hydroxycinnamoyltransferase (436 aa).

Residues His154 and Asp383 each act as proton acceptor in the active site.

The protein belongs to the plant acyltransferase family. Mostly expressed in stems, and, to a lower extent, in bulbs.

It functions in the pathway phenylpropanoid metabolism. In terms of biological role, hydroxycinnamoyl transferase that catalyzes the transfer of an acyl from p-coumaryol-CoA to various acyl acceptors. Can use feruloyl-CoA and caffeoyl-CoA as acyl donors. The chain is Hydroxycinnamoyltransferase from Narcissus pseudonarcissus (Daffodil).